The chain runs to 352 residues: C-C chemokine receptor type 5 (352 aa).

Topologically, residues 1-30 are extracellular; it reads MDYQVSSPTYDIDYYTSEPCQKINVKQIAG. A Sulfotyrosine modification is found at Y3. 2 O-linked (GalNAc...) serine glycosylation sites follow: S6 and S7. Sulfotyrosine occurs at positions 10, 14, and 15. Cystine bridges form between C20-C269 and C101-C178. A helical membrane pass occupies residues 31–58; it reads RLLPPLYSLVFIFGFVGNILVVLILINC. Residues 59-68 are Cytoplasmic-facing; it reads KRLKSMTDIY. The helical transmembrane segment at 69–89 threads the bilayer; the sequence is LLNLAISDLLFLLTVPFWAHY. Residues 90 to 102 lie on the Extracellular side of the membrane; sequence AAAQWDFGNTMCQ. The chain crosses the membrane as a helical span at residues 103 to 124; the sequence is LLTGLYFIGFFSGIFFIILLTI. Residues 125-141 lie on the Cytoplasmic side of the membrane; it reads DRYLAIVHAVFALKART. Residues 142–166 traverse the membrane as a helical segment; the sequence is VTFGVVTSVITWVVAVFASLPGIIF. Over 167–198 the chain is Extracellular; sequence TRSQREGLHYTCSSHFPYSQYQFWKNFQTLKI. The chain crosses the membrane as a helical span at residues 199–218; the sequence is VILGLVLPLLVMVICYSGIL. The Cytoplasmic portion of the chain corresponds to 219–235; that stretch reads KTLLRCRNEKKRHRAVR. A helical membrane pass occupies residues 236-260; that stretch reads LIFTIMIVYFLFWAPYNIVLLLNTF. The Extracellular portion of the chain corresponds to 261 to 277; sequence QEFFGLNNCSSSNRLDQ. A helical membrane pass occupies residues 278–301; sequence AMQVTETLGMTHCCINPIIYAFVG. The Cytoplasmic segment spans residues 302–352; that stretch reads EKFRNYLLVFFQKHIAKRFCKCCSIFQQEAPERASSVYTRSTGEQEISVGL. 3 S-palmitoyl cysteine lipidation sites follow: C321, C323, and C324. Phosphoserine; by BARK1 is present on residues S336, S337, S342, and S349.

Belongs to the G-protein coupled receptor 1 family. In terms of assembly, interacts with PRAF2. Efficient ligand binding to CCL3/MIP-1alpha and CCL4/MIP-1beta requires sulfation, O-glycosylation and sialic acid modifications. Glycosylation on Ser-6 is required for efficient binding of CCL4. Interacts with GRK2. Interacts with ARRB1 and ARRB2. Interacts with CNIH4. Interacts with S100A4; this interaction stimulates T-lymphocyte chemotaxis. Sulfated on at least 2 of the N-terminal tyrosines. Sulfation is required for efficient binding of the chemokines, CCL3 and CCL4. In terms of processing, palmitoylation in the C-terminal is important for cell surface expression. Post-translationally, phosphorylation on serine residues in the C-terminal is stimulated by binding CC chemokines especially by APO-RANTES. O-glycosylated, but not N-glycosylated. Ser-6 appears to be the major site even if Ser-7 may be also O-glycosylated. Also sialylated glycans present which contribute to chemokine binding. Thr-16 and Ser-17 may also be glycosylated and, if so, with small moieties such as a T-antigen.

It is found in the cell membrane. Its function is as follows. Receptor for a number of inflammatory CC-chemokines including CCL3/MIP-1-alpha, CCL4/MIP-1-beta and RANTES and subsequently transduces a signal by increasing the intracellular calcium ion level. May play a role in the control of granulocytic lineage proliferation or differentiation. Participates in T-lymphocyte migration to the infection site by acting as a chemotactic receptor. The protein is C-C chemokine receptor type 5 (CCR5) of Theropithecus gelada (Gelada baboon).